The primary structure comprises 371 residues: D-erythrose-4-phosphate dehydrogenase (371 aa).

12 to 13 (RI) provides a ligand contact to NAD(+). Residues 154 to 156 (SCT), R200, 213 to 214 (TK), and R236 contribute to the substrate site. C155 serves as the catalytic Nucleophile. N318 contributes to the NAD(+) binding site.

The protein belongs to the glyceraldehyde-3-phosphate dehydrogenase family. Epd subfamily. As to quaternary structure, homotetramer.

The protein resides in the cytoplasm. The enzyme catalyses D-erythrose 4-phosphate + NAD(+) + H2O = 4-phospho-D-erythronate + NADH + 2 H(+). Its pathway is cofactor biosynthesis; pyridoxine 5'-phosphate biosynthesis; pyridoxine 5'-phosphate from D-erythrose 4-phosphate: step 1/5. Functionally, catalyzes the NAD-dependent conversion of D-erythrose 4-phosphate to 4-phosphoerythronate. This chain is D-erythrose-4-phosphate dehydrogenase, found in Psychromonas ingrahamii (strain DSM 17664 / CCUG 51855 / 37).